Reading from the N-terminus, the 123-residue chain is Large ribosomal subunit protein bL12 (123 aa).

Belongs to the bacterial ribosomal protein bL12 family. In terms of assembly, homodimer. Part of the ribosomal stalk of the 50S ribosomal subunit. Forms a multimeric L10(L12)X complex, where L10 forms an elongated spine to which 2 to 4 L12 dimers bind in a sequential fashion. Binds GTP-bound translation factors.

Its function is as follows. Forms part of the ribosomal stalk which helps the ribosome interact with GTP-bound translation factors. Is thus essential for accurate translation. The chain is Large ribosomal subunit protein bL12 from Parvibaculum lavamentivorans (strain DS-1 / DSM 13023 / NCIMB 13966).